The chain runs to 513 residues: Sterol 14-alpha demethylase (513 aa).

A helical membrane pass occupies residues 10-30 (FTLVSAYAAAGLLAIIVLNLL). Asn-37 and Asn-406 each carry an N-linked (GlcNAc...) asparagine glycan. Cys-453 provides a ligand contact to heme.

Belongs to the cytochrome P450 family. Requires heme as cofactor.

The protein localises to the endoplasmic reticulum membrane. The enzyme catalyses a 14alpha-methyl steroid + 3 reduced [NADPH--hemoprotein reductase] + 3 O2 = a Delta(14) steroid + formate + 3 oxidized [NADPH--hemoprotein reductase] + 4 H2O + 4 H(+). It carries out the reaction a 14alpha-methyl steroid + reduced [NADPH--hemoprotein reductase] + O2 = a 14alpha-hydroxymethyl steroid + oxidized [NADPH--hemoprotein reductase] + H2O + H(+). The catalysed reaction is a 14alpha-hydroxymethyl steroid + reduced [NADPH--hemoprotein reductase] + O2 = a 14alpha-formyl steroid + oxidized [NADPH--hemoprotein reductase] + 2 H2O + H(+). It catalyses the reaction a 14alpha-formyl steroid + reduced [NADPH--hemoprotein reductase] + O2 = a Delta(14) steroid + formate + oxidized [NADPH--hemoprotein reductase] + H2O + 2 H(+). The enzyme catalyses lanosterol + 3 reduced [NADPH--hemoprotein reductase] + 3 O2 = 4,4-dimethyl-5alpha-cholesta-8,14,24-trien-3beta-ol + formate + 3 oxidized [NADPH--hemoprotein reductase] + 4 H2O + 4 H(+). It carries out the reaction lanosterol + reduced [NADPH--hemoprotein reductase] + O2 = 32-hydroxylanosterol + oxidized [NADPH--hemoprotein reductase] + H2O + H(+). The catalysed reaction is 32-hydroxylanosterol + reduced [NADPH--hemoprotein reductase] + O2 = 32-oxolanosterol + oxidized [NADPH--hemoprotein reductase] + 2 H2O + H(+). It catalyses the reaction 32-oxolanosterol + reduced [NADPH--hemoprotein reductase] + O2 = 4,4-dimethyl-5alpha-cholesta-8,14,24-trien-3beta-ol + formate + oxidized [NADPH--hemoprotein reductase] + H2O + 2 H(+). The enzyme catalyses eburicol + 3 reduced [NADPH--hemoprotein reductase] + 3 O2 = 14-demethyleburicol + formate + 3 oxidized [NADPH--hemoprotein reductase] + 4 H2O + 4 H(+). It carries out the reaction eburicol + reduced [NADPH--hemoprotein reductase] + O2 = 32-hydroxyeburicol + oxidized [NADPH--hemoprotein reductase] + H2O + H(+). The catalysed reaction is 32-hydroxyeburicol + reduced [NADPH--hemoprotein reductase] + O2 = 32-oxoeburicol + oxidized [NADPH--hemoprotein reductase] + 2 H2O + H(+). It catalyses the reaction 32-oxoeburicol + reduced [NADPH--hemoprotein reductase] + O2 = 14-demethyleburicol + formate + oxidized [NADPH--hemoprotein reductase] + H2O + 2 H(+). It participates in steroid biosynthesis; sterol biosynthesis. Its function is as follows. Sterol 14alpha-demethylase, encoded by cyp51A, cyp51B and cyp51C, that plays a critical role in the third module of ergosterol biosynthesis pathway, being ergosterol the major sterol component in fungal membranes that participates in a variety of functions. The third module or late pathway involves the ergosterol synthesis itself through consecutive reactions that mainly occur in the endoplasmic reticulum (ER) membrane. In filamentous fungi, during the initial step of this module, lanosterol (lanosta-8,24-dien-3beta-ol) can be metabolized to eburicol. Sterol 14alpha-demethylase catalyzes the three-step oxidative removal of the 14alpha-methyl group (C-32) of both these sterols in the form of formate, and converts eburicol and lanosterol to 14-demethyleburicol (4,4,24-trimethylergosta-8,14,24(28)-trienol) and 4,4-dimethyl-5alpha-cholesta-8,14,24-trien-3beta-ol, respectively, which are further metabolized by other enzymes in the pathway to ergosterol. Can also use substrates not intrinsic to fungi, such as 24,25-dihydrolanosterol (DHL), producing 4,4'-dimethyl-8,14-cholestadien-3-beta-ol, but at lower rates than the endogenous substrates. Functionally, as a target of azole drugs, plays a crucial role in azole susceptibility. This is Sterol 14-alpha demethylase from Aspergillus flavus (strain ATCC 200026 / FGSC A1120 / IAM 13836 / NRRL 3357 / JCM 12722 / SRRC 167).